Consider the following 27-residue polypeptide: Endoglucanase gh5 (27 aa).

The active-site Nucleophile is glutamate 6.

The catalysed reaction is Endohydrolysis of (1-&gt;4)-beta-D-glucosidic linkages in cellulose, lichenin and cereal beta-D-glucans.. With respect to regulation, activity is stimulated by zinc ions, potassium ions and DTT. Activity is inhibited by manganese and chloride ions. Functionally, endoglucanase (EG) that cleaves the internal beta-1,4-glucosidic bonds in cellulose. This Fomes meliae (Fomitopsis meliae) protein is Endoglucanase gh5.